We begin with the raw amino-acid sequence, 307 residues long: Nicotinamide/nicotinic acid mononucleotide adenylyltransferase 2 (307 aa).

NAD(+) contacts are provided by Ser16 and Phe17. His24 serves as a coordination point for ATP. 2 residues coordinate NAD(+): Trp92 and Thr95. Residues Cys164 and Cys165 are each lipidated (S-palmitoyl cysteine). The NAD(+) site is built by Gly200, Asp202, Leu212, Trp213, and Arg232. 271-274 (TKSR) serves as a coordination point for ATP.

Belongs to the eukaryotic NMN adenylyltransferase family. As to quaternary structure, monomer. Mg(2+) is required as a cofactor. Post-translationally, degraded in response to injured neurite. Degradation is caused by polyubiquitination by MYCBP2 after recognition by FBXO45. Palmitoylated; palmitoylation is required for membrane association. In terms of tissue distribution, expressed predominantly in the brain and nervous system.

It is found in the golgi apparatus membrane. Its subcellular location is the cytoplasmic vesicle membrane. The protein localises to the cytoplasm. It localises to the cell projection. The protein resides in the axon. It catalyses the reaction beta-nicotinamide D-ribonucleotide + ATP + H(+) = diphosphate + NAD(+). The enzyme catalyses nicotinate beta-D-ribonucleotide + ATP + H(+) = deamido-NAD(+) + diphosphate. It participates in cofactor biosynthesis; NAD(+) biosynthesis; NAD(+) from nicotinamide D-ribonucleotide: step 1/1. The protein operates within cofactor biosynthesis; NAD(+) biosynthesis; deamido-NAD(+) from nicotinate D-ribonucleotide: step 1/1. Its activity is regulated as follows. Inhibited by P1-(adenosine-5')-P3-(nicotinamide-riboside-5')-triphosphate (Np3AD) and P1-(adenosine-5')-P4-(nicotinamide-riboside-5')-tetraphosphate (Np4AD). Its function is as follows. Nicotinamide/nicotinate-nucleotide adenylyltransferase that acts as an axon maintenance factor. Axon survival factor required for the maintenance of healthy axons: acts by delaying Wallerian axon degeneration, an evolutionarily conserved process that drives the loss of damaged axons. Catalyzes the formation of NAD(+) from nicotinamide mononucleotide (NMN) and ATP. Can also use the deamidated form; nicotinic acid mononucleotide (NaMN) as substrate but with a lower efficiency. Cannot use triazofurin monophosphate (TrMP) as substrate. Also catalyzes the reverse reaction, i.e. the pyrophosphorolytic cleavage of NAD(+). For the pyrophosphorolytic activity prefers NAD(+), NADH and NaAD as substrates and degrades nicotinic acid adenine dinucleotide phosphate (NHD) less effectively. Fails to cleave phosphorylated dinucleotides NADP(+), NADPH and NaADP(+). Also acts as an activator of ADP-ribosylation by supporting the catalytic activity of PARP16 and promoting mono-ADP-ribosylation of ribosomes by PARP16. May be involved in the maintenance of axonal integrity. This chain is Nicotinamide/nicotinic acid mononucleotide adenylyltransferase 2, found in Mus musculus (Mouse).